Reading from the N-terminus, the 461-residue chain is L-seryl-tRNA(Sec) selenium transferase (461 aa).

Lys294 is modified (N6-(pyridoxal phosphate)lysine).

The protein belongs to the SelA family. Requires pyridoxal 5'-phosphate as cofactor.

The protein resides in the cytoplasm. The catalysed reaction is L-seryl-tRNA(Sec) + selenophosphate + H(+) = L-selenocysteinyl-tRNA(Sec) + phosphate. It participates in aminoacyl-tRNA biosynthesis; selenocysteinyl-tRNA(Sec) biosynthesis; selenocysteinyl-tRNA(Sec) from L-seryl-tRNA(Sec) (bacterial route): step 1/1. In terms of biological role, converts seryl-tRNA(Sec) to selenocysteinyl-tRNA(Sec) required for selenoprotein biosynthesis. In Actinobacillus pleuropneumoniae serotype 7 (strain AP76), this protein is L-seryl-tRNA(Sec) selenium transferase.